The following is a 206-amino-acid chain: NADH-quinone oxidoreductase subunit C (206 aa).

This sequence belongs to the complex I 30 kDa subunit family. NDH-1 is composed of 14 different subunits. Subunits NuoB, C, D, E, F, and G constitute the peripheral sector of the complex.

Its subcellular location is the cell inner membrane. It carries out the reaction a quinone + NADH + 5 H(+)(in) = a quinol + NAD(+) + 4 H(+)(out). In terms of biological role, NDH-1 shuttles electrons from NADH, via FMN and iron-sulfur (Fe-S) centers, to quinones in the respiratory chain. The immediate electron acceptor for the enzyme in this species is believed to be ubiquinone. Couples the redox reaction to proton translocation (for every two electrons transferred, four hydrogen ions are translocated across the cytoplasmic membrane), and thus conserves the redox energy in a proton gradient. The protein is NADH-quinone oxidoreductase subunit C of Bordetella avium (strain 197N).